A 58-amino-acid chain; its full sequence is Small ribosomal subunit protein bS21 (58 aa).

The span at 32–42 shows a compositional bias: basic and acidic residues; the sequence is VRKREHYEKPS. Residues 32 to 58 form a disordered region; that stretch reads VRKREHYEKPSVKKKKKSEAARKRKFK. The segment covering 43 to 58 has biased composition (basic residues); it reads VKKKKKSEAARKRKFK.

The protein belongs to the bacterial ribosomal protein bS21 family.

This Clostridium botulinum (strain Okra / Type B1) protein is Small ribosomal subunit protein bS21.